The sequence spans 201 residues: ATP-dependent Clp protease proteolytic subunit (201 aa).

Serine 97 serves as the catalytic Nucleophile. Histidine 122 is an active-site residue.

It belongs to the peptidase S14 family. Fourteen ClpP subunits assemble into 2 heptameric rings which stack back to back to give a disk-like structure with a central cavity, resembling the structure of eukaryotic proteasomes.

It is found in the cytoplasm. It carries out the reaction Hydrolysis of proteins to small peptides in the presence of ATP and magnesium. alpha-casein is the usual test substrate. In the absence of ATP, only oligopeptides shorter than five residues are hydrolyzed (such as succinyl-Leu-Tyr-|-NHMec, and Leu-Tyr-Leu-|-Tyr-Trp, in which cleavage of the -Tyr-|-Leu- and -Tyr-|-Trp bonds also occurs).. Functionally, cleaves peptides in various proteins in a process that requires ATP hydrolysis. Has a chymotrypsin-like activity. Plays a major role in the degradation of misfolded proteins. This Nitratidesulfovibrio vulgaris (strain DSM 19637 / Miyazaki F) (Desulfovibrio vulgaris) protein is ATP-dependent Clp protease proteolytic subunit.